The primary structure comprises 74 residues: Peptide ToAP4 (74 aa).

A signal peptide spans 1–22 (MQIKHLITLFFLVLIVADQCSA). Lysine amide is present on K39. Positions 40 to 74 (GGRRKREIAAQIEQYRDLQKREAELEELLDRLPMF) are excised as a propeptide.

Belongs to the non-disulfide-bridged peptide (NDBP) superfamily. Short antimicrobial peptide (group 4) family. In terms of tissue distribution, expressed by the venom gland.

It localises to the secreted. Shows anti-inflammatory activities, since it decreases release of pro-inflammatory cytokines, and increases release of anti-inflammatory cytokines. Acts by blocking the Toll-like receptor 4 (TLR4). Also increases MHC-II expression in LPS-stimulated cells. Does not show antibacterial activity on Mycobacterium abscessus subsp. massiliense. Does not show antifungal activity. Has low hemolytic activity on human erythrocyte and low monocyte cytotoxicity. In vivo, does not induce immune cell migration. Helical wheel projections predict an amphipathic peptide with distinct hydrophobic and hydrophilic faces. In Tityus obscurus (Amazonian scorpion), this protein is Peptide ToAP4.